Here is a 502-residue protein sequence, read N- to C-terminus: Cytochrome P450 71B20 (502 aa).

Residues 1 to 21 (MAISFLCFCLITLASLIFFAK) form a helical membrane-spanning segment. Cys-444 contacts heme.

This sequence belongs to the cytochrome P450 family. Requires heme as cofactor.

The protein localises to the membrane. The polypeptide is Cytochrome P450 71B20 (CYP71B20) (Arabidopsis thaliana (Mouse-ear cress)).